Reading from the N-terminus, the 580-residue chain is NADH-quinone oxidoreductase subunit C/D (580 aa).

The tract at residues 1 to 171 (MSLDQAIPEA…PPFVLTDRLF (171 aa)) is NADH dehydrogenase I subunit C. The interval 195–580 (ELMVLNFGPH…IDFVMSDVDR (386 aa)) is NADH dehydrogenase I subunit D.

The protein in the N-terminal section; belongs to the complex I 30 kDa subunit family. It in the C-terminal section; belongs to the complex I 49 kDa subunit family. NDH-1 is composed of 13 different subunits. Subunits NuoB, CD, E, F, and G constitute the peripheral sector of the complex.

It is found in the cell inner membrane. The catalysed reaction is a quinone + NADH + 5 H(+)(in) = a quinol + NAD(+) + 4 H(+)(out). In terms of biological role, NDH-1 shuttles electrons from NADH, via FMN and iron-sulfur (Fe-S) centers, to quinones in the respiratory chain. The immediate electron acceptor for the enzyme in this species is believed to be ubiquinone. Couples the redox reaction to proton translocation (for every two electrons transferred, four hydrogen ions are translocated across the cytoplasmic membrane), and thus conserves the redox energy in a proton gradient. This chain is NADH-quinone oxidoreductase subunit C/D, found in Cereibacter sphaeroides (strain ATCC 17029 / ATH 2.4.9) (Rhodobacter sphaeroides).